A 224-amino-acid chain; its full sequence is ATP phosphoribosyltransferase (224 aa).

Belongs to the ATP phosphoribosyltransferase family. Short subfamily. Heteromultimer composed of HisG and HisZ subunits.

The protein localises to the cytoplasm. The catalysed reaction is 1-(5-phospho-beta-D-ribosyl)-ATP + diphosphate = 5-phospho-alpha-D-ribose 1-diphosphate + ATP. Its pathway is amino-acid biosynthesis; L-histidine biosynthesis; L-histidine from 5-phospho-alpha-D-ribose 1-diphosphate: step 1/9. In terms of biological role, catalyzes the condensation of ATP and 5-phosphoribose 1-diphosphate to form N'-(5'-phosphoribosyl)-ATP (PR-ATP). Has a crucial role in the pathway because the rate of histidine biosynthesis seems to be controlled primarily by regulation of HisG enzymatic activity. The chain is ATP phosphoribosyltransferase from Cupriavidus necator (strain ATCC 17699 / DSM 428 / KCTC 22496 / NCIMB 10442 / H16 / Stanier 337) (Ralstonia eutropha).